Here is a 276-residue protein sequence, read N- to C-terminus: Bis(5'-nucleosyl)-tetraphosphatase, symmetrical (276 aa).

Belongs to the Ap4A hydrolase family.

It carries out the reaction P(1),P(4)-bis(5'-adenosyl) tetraphosphate + H2O = 2 ADP + 2 H(+). Its function is as follows. Hydrolyzes diadenosine 5',5'''-P1,P4-tetraphosphate to yield ADP. The chain is Bis(5'-nucleosyl)-tetraphosphatase, symmetrical from Mannheimia succiniciproducens (strain KCTC 0769BP / MBEL55E).